A 413-amino-acid polypeptide reads, in one-letter code: Coiled-coil domain-containing protein 83 (413 aa).

The segment at 1–21 (MENSGKANKKDTHDGPPKEIK) is disordered. Over residues 8 to 21 (NKKDTHDGPPKEIK) the composition is skewed to basic and acidic residues. Coiled-coil stretches lie at residues 37–184 (EDAV…RKKI) and 216–256 (WEND…LSNC).

This chain is Coiled-coil domain-containing protein 83 (CCDC83), found in Homo sapiens (Human).